The following is a 1024-amino-acid chain: Error-prone DNA polymerase (1024 aa).

Belongs to the DNA polymerase type-C family. DnaE2 subfamily.

It is found in the cytoplasm. It catalyses the reaction DNA(n) + a 2'-deoxyribonucleoside 5'-triphosphate = DNA(n+1) + diphosphate. In terms of biological role, DNA polymerase involved in damage-induced mutagenesis and translesion synthesis (TLS). It is not the major replicative DNA polymerase. The protein is Error-prone DNA polymerase of Vibrio campbellii (strain ATCC BAA-1116).